The following is an 80-amino-acid chain: 14-3-3-like protein 1 (80 aa).

Belongs to the 14-3-3 family.

The polypeptide is 14-3-3-like protein 1 (Pseudotsuga menziesii (Douglas-fir)).